The sequence spans 140 residues: Desampylase (140 aa).

The 121-residue stretch at 13 to 133 (TLIIPQHYLR…WILSEKNKIS (121 aa)) folds into the MPN domain. Catalysis depends on glutamate 34, which acts as the Proton donor/acceptor. Residues histidine 88, histidine 90, and aspartate 101 each coordinate Zn(2+). Positions 88 to 101 (HSHIACPPIPSGKD) match the JAMM motif motif.

This sequence belongs to the peptidase M67B family. Exists in two major states: monomer and homodimer. Both conformational states are catalytically active. Zn(2+) serves as cofactor. The disulfide bridge probably stabilizes the PfJAMM1 homodimer at the optimal growth temperature of the hyperthermophile.

It carries out the reaction an N(6)-[small archaeal modifier protein]-[protein]-L-lysine + H2O = a [protein]-L-lysine + a [small archaeal modifier protein].. Its activity is regulated as follows. Inhibited by EDTA in vitro. Functionally, metalloprotease that displays desampylase (DSAMP) activity, cleaving ubiquitin-like small archaeal modifier proteins (SAMP1, SAMP2 and SAMP3) from protein conjugates (isopeptide- and linear-linked). Thus, likely regulates sampylation and the pools of 'free' SAMP available for protein modification. In vitro, is also able to cleave non-physiological ubiquitin (Ub) substrates, such as 'Met1-', 'Lys48-', and 'Lys63'-linked Ub dimers (Ub2), and to remove Ub tags from diverse proteins. This is Desampylase from Pyrococcus furiosus (strain ATCC 43587 / DSM 3638 / JCM 8422 / Vc1).